A 569-amino-acid chain; its full sequence is AP-4 complex accessory subunit Tepsin (569 aa).

Positions 8 to 141 constitute an ENTH domain; that stretch reads RDRLSFLHRL…FSDALPQPPS (134 aa). Residues 196-298 form a disordered region; it reads VRPGPDNPCT…SGASREPGDL (103 aa). Positions 219–229 are enriched in polar residues; it reads VTPSASHTHPN. A compositionally biased stretch (low complexity) spans 260–292; it reads SSPSSQNSSCTSNLSRASDSVSRSGSDSHSGAS. Ser400 carries the phosphoserine modification. The tract at residues 467-524 is disordered; that stretch reads VPRSPVPTPSPDTLPPALQDPGELRTQLVCSSEPGTGSEQRLENTDTPKDSSSPCPWS. Over residues 470-480 the composition is skewed to pro residues; the sequence is SPVPTPSPDTL. Residues 494 to 505 are compositionally biased toward polar residues; the sequence is LVCSSEPGTGSE. Residues 506–515 are compositionally biased toward basic and acidic residues; it reads QRLENTDTPK. An interaction with AP4B1 region spans residues 525-535; it reads PNSLFAGMELV. The interaction with AP4E1 stretch occupies residues 559–569; that stretch reads SEPSAFAFLNM.

In terms of assembly, interacts with AP4B1 and AP4E1; the interaction is direct and mediates the association of TEPSIN with the adapter-like complex 4 (AP-4), a heterotetramer composed of AP4B1, AP4E1, AP4M1 and AP4S1.

The protein localises to the golgi apparatus. The protein resides in the trans-Golgi network membrane. Its subcellular location is the cytoplasmic vesicle. It is found in the cytoplasm. It localises to the cytosol. In terms of biological role, associates with the adapter-like complex 4 (AP-4) and may therefore play a role in vesicular trafficking of proteins at the trans-Golgi network. The polypeptide is AP-4 complex accessory subunit Tepsin (Rattus norvegicus (Rat)).